A 419-amino-acid chain; its full sequence is N-acylglucosamine 2-epimerase (419 aa).

The leucine-zipper stretch occupies residues 185 to 206; it reads LLSLVEQLGEEDEELTNMYAEL. Phosphoserine is present on Ser-418.

The protein belongs to the N-acylglucosamine 2-epimerase family. In terms of assembly, homodimer. Forms a heterodimer with renin and inhibits its activity.

The catalysed reaction is an N-acyl-D-glucosamine = an N-acyl-D-mannosamine. It functions in the pathway amino-sugar metabolism; N-acetylneuraminate degradation. Its function is as follows. Catalyzes the interconversion of N-acetylglucosamine to N-acetylmannosamine. Involved in the N-glycolylneuraminic acid (Neu5Gc) degradation pathway. The sequence is that of N-acylglucosamine 2-epimerase (Renbp) from Mus musculus (Mouse).